We begin with the raw amino-acid sequence, 187 residues long: UPF0215 protein PAE0952 (187 aa).

Belongs to the UPF0215 family.

This Pyrobaculum aerophilum (strain ATCC 51768 / DSM 7523 / JCM 9630 / CIP 104966 / NBRC 100827 / IM2) protein is UPF0215 protein PAE0952.